Consider the following 622-residue polypeptide: Kinesin-like protein KIFC1 (622 aa).

The disordered stretch occupies residues 1 to 88; sequence MKEALEPAKK…KRPGKRPDWD (88 aa). Positions 32–41 are enriched in polar residues; the sequence is SSLSQPQGPT. Residues 95–264 adopt a coiled-coil conformation; that stretch reads DLTEELKCYR…QELKGNIRVF (170 aa). Residues 260 to 612 enclose the Kinesin motor domain; the sequence is NIRVFCRVRP…LRFASKVNQC (353 aa). A disordered region spans residues 279–323; that stretch reads PGFLLFPHGPAGPSDPPTRLSLSRSDDRRSTLTRAPAPTTRHDFS. Position 309 is a phosphothreonine (T309). 360-367 provides a ligand contact to ATP; the sequence is GQTGSGKT.

Belongs to the TRAFAC class myosin-kinesin ATPase superfamily. Kinesin family. NCD subfamily. In terms of assembly, binds NUBP1 and NUBP2. Interacts with PPP1R42.

The protein resides in the nucleus. Its subcellular location is the cytoplasm. The protein localises to the cytoskeleton. It localises to the microtubule organizing center. It is found in the centrosome. The protein resides in the spindle. Its subcellular location is the early endosome. In terms of biological role, minus end-directed microtubule-dependent motor required for bipolar spindle formation. May contribute to movement of early endocytic vesicles. Regulates cilium formation and structure. This Cricetulus griseus (Chinese hamster) protein is Kinesin-like protein KIFC1.